Reading from the N-terminus, the 386-residue chain is Alanine racemase (386 aa).

The active-site Proton acceptor; specific for D-alanine is the K48. K48 bears the N6-(pyridoxal phosphate)lysine mark. R147 lines the substrate pocket. Y279 serves as the catalytic Proton acceptor; specific for L-alanine. Residue M327 coordinates substrate.

Belongs to the alanine racemase family. The cofactor is pyridoxal 5'-phosphate.

The catalysed reaction is L-alanine = D-alanine. It participates in amino-acid biosynthesis; D-alanine biosynthesis; D-alanine from L-alanine: step 1/1. Catalyzes the interconversion of L-alanine and D-alanine. May also act on other amino acids. This is Alanine racemase (alr) from Prochlorococcus marinus (strain SARG / CCMP1375 / SS120).